We begin with the raw amino-acid sequence, 388 residues long: Succinate--CoA ligase [ADP-forming] subunit beta (388 aa).

An ATP-grasp domain is found at Lys9–His244. Residues Lys46, Gly53 to Gly55, Glu99, Thr102, and Glu107 contribute to the ATP site. Residues Asn199 and Asp213 each contribute to the Mg(2+) site. Substrate is bound by residues Asn264 and Gly321–Val323.

Belongs to the succinate/malate CoA ligase beta subunit family. As to quaternary structure, heterotetramer of two alpha and two beta subunits. The cofactor is Mg(2+).

The catalysed reaction is succinate + ATP + CoA = succinyl-CoA + ADP + phosphate. The enzyme catalyses GTP + succinate + CoA = succinyl-CoA + GDP + phosphate. It participates in carbohydrate metabolism; tricarboxylic acid cycle; succinate from succinyl-CoA (ligase route): step 1/1. Succinyl-CoA synthetase functions in the citric acid cycle (TCA), coupling the hydrolysis of succinyl-CoA to the synthesis of either ATP or GTP and thus represents the only step of substrate-level phosphorylation in the TCA. The beta subunit provides nucleotide specificity of the enzyme and binds the substrate succinate, while the binding sites for coenzyme A and phosphate are found in the alpha subunit. The chain is Succinate--CoA ligase [ADP-forming] subunit beta from Pseudoalteromonas translucida (strain TAC 125).